The sequence spans 125 residues: Small ribosomal subunit protein uS13 (125 aa).

It belongs to the universal ribosomal protein uS13 family. As to quaternary structure, part of the 30S ribosomal subunit. Forms a loose heterodimer with protein S19. Forms two bridges to the 50S subunit in the 70S ribosome.

Its function is as follows. Located at the top of the head of the 30S subunit, it contacts several helices of the 16S rRNA. In the 70S ribosome it contacts the 23S rRNA (bridge B1a) and protein L5 of the 50S subunit (bridge B1b), connecting the 2 subunits; these bridges are implicated in subunit movement. Contacts the tRNAs in the A and P-sites. In Rickettsia bellii (strain OSU 85-389), this protein is Small ribosomal subunit protein uS13.